A 382-amino-acid chain; its full sequence is Dual-specificity RNA methyltransferase RlmN (382 aa).

The Proton acceptor role is filled by Glu-96. Residues 102–342 form the Radical SAM core domain; sequence QGKRGTLCVS…VRTTRGEDID (241 aa). Cys-109 and Cys-345 are joined by a disulfide. Residues Cys-116, Cys-120, and Cys-123 each contribute to the [4Fe-4S] cluster site. S-adenosyl-L-methionine-binding positions include 170-171, Ser-202, 224-226, and Asn-302; these read GE and SLH. Cys-345 (S-methylcysteine intermediate) is an active-site residue.

Belongs to the radical SAM superfamily. RlmN family. Requires [4Fe-4S] cluster as cofactor.

The protein resides in the cytoplasm. The catalysed reaction is adenosine(2503) in 23S rRNA + 2 reduced [2Fe-2S]-[ferredoxin] + 2 S-adenosyl-L-methionine = 2-methyladenosine(2503) in 23S rRNA + 5'-deoxyadenosine + L-methionine + 2 oxidized [2Fe-2S]-[ferredoxin] + S-adenosyl-L-homocysteine. The enzyme catalyses adenosine(37) in tRNA + 2 reduced [2Fe-2S]-[ferredoxin] + 2 S-adenosyl-L-methionine = 2-methyladenosine(37) in tRNA + 5'-deoxyadenosine + L-methionine + 2 oxidized [2Fe-2S]-[ferredoxin] + S-adenosyl-L-homocysteine. In terms of biological role, specifically methylates position 2 of adenine 2503 in 23S rRNA and position 2 of adenine 37 in tRNAs. m2A2503 modification seems to play a crucial role in the proofreading step occurring at the peptidyl transferase center and thus would serve to optimize ribosomal fidelity. The chain is Dual-specificity RNA methyltransferase RlmN from Pseudomonas fluorescens (strain Pf0-1).